The sequence spans 222 residues: MPSLSKEAALVHEALVARGLETPLRPPVNELDNETRKRLIAGHMTEIMQLLNLDLSDDSLMETPQRIAKMYVDEIFSGLDYANFPKITVIENKMNVDEMVTVRDITLTSTCEHHFVTIDGKATVAYIPKDTVIGLSKINRIVQFFAQRPQVQERLTQQILTALQTLLGTNNVAVSIDAVHYCVKARGVRDATSATTTTSLGGLFKSSQNTRQEFLRAVRHHN.

Zn(2+) is bound by residues cysteine 111, histidine 114, and cysteine 182.

This sequence belongs to the GTP cyclohydrolase I family. In terms of assembly, toroid-shaped homodecamer, composed of two pentamers of five dimers.

The enzyme catalyses GTP + H2O = 7,8-dihydroneopterin 3'-triphosphate + formate + H(+). The protein operates within cofactor biosynthesis; 7,8-dihydroneopterin triphosphate biosynthesis; 7,8-dihydroneopterin triphosphate from GTP: step 1/1. This Enterobacter sp. (strain 638) protein is GTP cyclohydrolase 1.